Consider the following 243-residue polypeptide: Killer cell lectin-like receptor subfamily I member 1 (243 aa).

Residues M1–R80 lie on the Cytoplasmic side of the membrane. Short sequence motifs (ITIM motif) lie at residues I16–L21 and L47–L52. A helical; Signal-anchor for type II membrane protein membrane pass occupies residues V81–V101. Topologically, residues P102 to M243 are extracellular. N123, N191, N194, N200, and N214 each carry an N-linked (GlcNAc...) asparagine glycan. Residues F137–E239 enclose the C-type lectin domain. 2 disulfide bridges follow: C158–C238 and C217–C230.

In terms of assembly, heterodimer with KLRE1. Interacts with PTPN6. As to expression, expressed in natural killer (NK) cells.

The protein localises to the cell membrane. Lectin-like receptor for natural killer (NK) cells. Heterodimer formation with KLRE1 mediates inhibition of NK cell cytolytic activity. The protein is Killer cell lectin-like receptor subfamily I member 1 of Rattus norvegicus (Rat).